A 338-amino-acid polypeptide reads, in one-letter code: STEAP1 protein (338 aa).

The next 2 helical transmembrane spans lie at 70–90 and 118–138; these read WHLP…YTLL and PMVS…AAIV. Residues 117-264 enclose the Ferric oxidoreductase domain; sequence LPMVSITLLA…TLGIVSLLLG (148 aa). FAD-binding residues include Q139 and R160. Transmembrane regions (helical) follow at residues 163-183, 217-237, 252-272, and 290-310; these read FGLL…SYPM, IYVS…VTSI, IQST…LIFA, and FMIA…LLLP. Residue H174 coordinates heme b. Residues S236 and Q253 each contribute to the FAD site. Residue H267 coordinates heme b.

This sequence belongs to the STEAP family. As to quaternary structure, homotrimer. Requires FAD as cofactor. The cofactor is heme b.

Its subcellular location is the endosome membrane. The protein resides in the cell membrane. Does not function as a metalloreductase due to the absence of binding sites for the electron-donating substrate NADPH. In Sus scrofa (Pig), this protein is STEAP1 protein (STEAP1).